Here is a 98-residue protein sequence, read N- to C-terminus: Cystatin-B (98 aa).

M1 is modified (N-acetylmethionine). The short motif at 46 to 50 is the Secondary area of contact element; it reads QVVAG.

The protein belongs to the cystatin family.

The protein localises to the cytoplasm. Functionally, this is an intracellular thiol proteinase inhibitor. In Sus scrofa (Pig), this protein is Cystatin-B (CSTB).